The primary structure comprises 158 residues: MSNEFTHINADGNAHMVDVTEKAVTEREARAEAYIEMAADTLEMIMSGSHHKGDVFATARIAGIQAAKKTSDLIPLCHPLMLTKVEVELEAQPEFNRVRITSLCKLSGKTGVEMEALTAASVAALTIYDMCKAVQKDMVISQTRLLEKRGGKSGHFKV.

Residues 76–78 (LCH) and 114–115 (ME) each bind substrate. Asp129 is an active-site residue.

It belongs to the MoaC family. In terms of assembly, homohexamer; trimer of dimers.

It carries out the reaction (8S)-3',8-cyclo-7,8-dihydroguanosine 5'-triphosphate = cyclic pyranopterin phosphate + diphosphate. It functions in the pathway cofactor biosynthesis; molybdopterin biosynthesis. Its function is as follows. Catalyzes the conversion of (8S)-3',8-cyclo-7,8-dihydroguanosine 5'-triphosphate to cyclic pyranopterin monophosphate (cPMP). This chain is Cyclic pyranopterin monophosphate synthase, found in Shewanella sediminis (strain HAW-EB3).